The following is a 229-amino-acid chain: Synaptogyrin-3 (229 aa).

M1 is modified (N-acetylmethionine). Positions 20–172 constitute an MARVEL domain; the sequence is FARRPQTLLR…LTVKALQRFR (153 aa). The next 4 helical transmembrane spans lie at 30–50, 70–90, 105–125, and 148–168; these read VASW…GYVN, FGVA…LLDV, VLLD…GFCF, and AAIA…VKAL. Residues 209 to 219 are compositionally biased toward polar residues; sequence QSPPFTETLDT. The tract at residues 209–229 is disordered; the sequence is QSPPFTETLDTSPKGYQVPAY.

Belongs to the synaptogyrin family. Interacts (via N-terminus) with SLC6A3 (via N-terminus). May interact with VMAT2. Expressed in brain and placenta.

The protein localises to the cytoplasmic vesicle. The protein resides in the secretory vesicle. Its subcellular location is the synaptic vesicle membrane. It localises to the synapse. Its function is as follows. May play a role in regulated exocytosis. May indirectly regulate the activity of the plasma membrane dopamine transporter SLC6A3 and thereby regulate dopamine transport back from the synaptic cleft into the presynaptic terminal. The sequence is that of Synaptogyrin-3 from Homo sapiens (Human).